Here is a 100-residue protein sequence, read N- to C-terminus: Tuberoinfundibular peptide of 39 residues (100 aa).

The signal sequence occupies residues 1-30; that stretch reads METRQVSRSPRVRLLLLLLLLLVVPWGVRT. Residues 31-59 constitute a propeptide that is removed on maturation; it reads ASGVALPPVGVLSLRPPGRAWADPATPRP.

The protein belongs to the parathyroid hormone family. As to quaternary structure, ligand of high affinity for the PTH2 receptor (PTH2R).

The protein resides in the secreted. Functionally, plays a role as a potent and selective agonist of PTH2R resulting in adenyl cyclase activation and intracellular calcium levels elevation. Induces protein kinase C beta activation, recruitment of beta-arrestin and PTH2R internalization. May inhibit cell proliferation via its action of PTH2R activation. Neuropeptide which may also have a role in spermatogenesis. May activate nociceptors and nociceptive circuits. The protein is Tuberoinfundibular peptide of 39 residues (PTH2) of Bos taurus (Bovine).